A 464-amino-acid polypeptide reads, in one-letter code: Argininosuccinate lyase (464 aa).

This sequence belongs to the lyase 1 family. Argininosuccinate lyase subfamily.

The protein resides in the cytoplasm. It carries out the reaction 2-(N(omega)-L-arginino)succinate = fumarate + L-arginine. The protein operates within amino-acid biosynthesis; L-arginine biosynthesis; L-arginine from L-ornithine and carbamoyl phosphate: step 3/3. The chain is Argininosuccinate lyase from Stutzerimonas stutzeri (strain A1501) (Pseudomonas stutzeri).